Reading from the N-terminus, the 433-residue chain is uncharacterized protein (433 aa).

The tract at residues 1–126 (MAAHIALIAH…VIKLLGKTKT (126 aa)) is methylglyoxal synthase. An MGS-like domain is found at 1 to 145 (MAAHIALIAH…GQGNVERELD (145 aa)). Residue Asp-62 is part of the active site. One can recognise a DAGKc domain in the interval 127-262 (GHLIFNPVAG…VDTALCNDIP (136 aa)).

The protein in the N-terminal section; belongs to the methylglyoxal synthase family.

This is an uncharacterized protein from Synechocystis sp. (strain ATCC 27184 / PCC 6803 / Kazusa).